The chain runs to 343 residues: Glucokinase (343 aa).

18-23 (GDIGGT) is an ATP binding site.

The protein belongs to the bacterial glucokinase family.

It localises to the cytoplasm. The catalysed reaction is D-glucose + ATP = D-glucose 6-phosphate + ADP + H(+). The protein is Glucokinase of Brucella suis biovar 1 (strain 1330).